Consider the following 312-residue polypeptide: Acetyl-coenzyme A carboxylase carboxyl transferase subunit alpha (312 aa).

In terms of domain architecture, CoA carboxyltransferase C-terminal spans 36-286; that stretch reads RLDKEVKSIY…KEYFLDALRT (251 aa).

This sequence belongs to the AccA family. As to quaternary structure, acetyl-CoA carboxylase is a heterohexamer composed of biotin carboxyl carrier protein (AccB), biotin carboxylase (AccC) and two subunits each of ACCase subunit alpha (AccA) and ACCase subunit beta (AccD).

The protein localises to the cytoplasm. It carries out the reaction N(6)-carboxybiotinyl-L-lysyl-[protein] + acetyl-CoA = N(6)-biotinyl-L-lysyl-[protein] + malonyl-CoA. It functions in the pathway lipid metabolism; malonyl-CoA biosynthesis; malonyl-CoA from acetyl-CoA: step 1/1. In terms of biological role, component of the acetyl coenzyme A carboxylase (ACC) complex. First, biotin carboxylase catalyzes the carboxylation of biotin on its carrier protein (BCCP) and then the CO(2) group is transferred by the carboxyltransferase to acetyl-CoA to form malonyl-CoA. The polypeptide is Acetyl-coenzyme A carboxylase carboxyl transferase subunit alpha (Helicobacter pylori (strain Shi470)).